The primary structure comprises 406 residues: Cholinephosphotransferase 1 (406 aa).

Alanine 2 is modified (N-acetylalanine). Over 2–62 (AAGAGARPAP…LLQWIPLWMA (61 aa)) the chain is Cytoplasmic. The helical transmembrane segment at 63 to 83 (PNSITLLGLAINMLTTLVLIS) threads the bilayer. A CDP-choline-binding site is contributed by asparagine 64. Topologically, residues 84 to 93 (YCPTVTEEAP) are lumenal. A helical transmembrane segment spans residues 94 to 118 (YWTYLLCALGLFIYQSLDAIDGKQA). The Mg(2+) site is built by aspartate 111 and aspartate 114. Arginine 119 is a binding site for CDP-choline. At 119 to 125 (RRTNSCS) the chain is on the cytoplasmic side. The chain crosses the membrane as a helical span at residues 126 to 150 (PLGELFDHGCDSLSTVFMAVGASIA). Aspartate 132 contributes to the Mg(2+) binding site. Histidine 133 acts as the Proton acceptor in catalysis. Aspartate 136 contributes to the Mg(2+) binding site. At 151-160 (VRLGTHPDWL) the chain is on the lumenal side. A helical membrane pass occupies residues 161–179 (FFCSFIGMFMFYCAHWQTY). Residues 180-190 (VSGVLRFGKVD) lie on the Cytoplasmic side of the membrane. The chain crosses the membrane as a helical span at residues 191 to 207 (VTEIQIALVIVFVLSTF). The Lumenal portion of the chain corresponds to 208-222 (GGATMWDYTIPILEI). Residues 223-248 (KLKILPVLGVVGGAIFSCSNYFHVIL) traverse the membrane as a helical segment. At 249-265 (HGGVGKNGSTIAGTSVL) the chain is on the cytoplasmic side. Residues 266 to 281 (SPGLHIGIIIILAIMI) form a helical membrane-spanning segment. At 282-293 (YKKSATNLFEKH) the chain is on the lumenal side. A helical transmembrane segment spans residues 294-316 (PCLYTLMFGCVFAKVSQKLVIAH). Over 317–329 (MTKSELYLQDTVF) the chain is Cytoplasmic. The helical transmembrane segment at 330–339 (IGPGLLFLDQ) threads the bilayer. The Lumenal segment spans residues 340 to 346 (YFNNFVD). A helical membrane pass occupies residues 347–376 (EYIVLWIAMVISSLDMMRYFSALCLQISRH). Residues 377–406 (LHLSIFKTSCHQAPEQVQVLPPKSHQNNMD) are Cytoplasmic-facing.

This sequence belongs to the CDP-alcohol phosphatidyltransferase class-I family. It depends on Mg(2+) as a cofactor. The cofactor is Mn(2+).

Its subcellular location is the golgi apparatus membrane. The enzyme catalyses CDP-choline + a 1,2-diacyl-sn-glycerol = a 1,2-diacyl-sn-glycero-3-phosphocholine + CMP + H(+). It catalyses the reaction 1-octadecanoyl-2-(5Z,8Z,11Z,14Z-eicosatetraenoyl)-sn-glycerol + CDP-choline = 1-octadecanoyl-2-(5Z,8Z,11Z,14Z-eicosatetraenoyl)-sn-glycero-3-phosphocholine + CMP + H(+). It carries out the reaction 1-hexadecanoyl-2-(9Z-octadecenoyl)-sn-glycerol + CDP-choline = 1-hexadecanoyl-2-(9Z-octadecenoyl)-sn-glycero-3-phosphocholine + CMP + H(+). The catalysed reaction is 1-hexadecanoyl-2-(4Z,7Z,10Z,13Z,16Z,19Z-docosahexaenoyl)-sn-glycerol + CDP-choline = 1-hexadecanoyl-2-(4Z,7Z,10Z,13Z,16Z,19Z-docosahexaenoyl)-sn-glycero-3-phosphocholine + CMP + H(+). The enzyme catalyses 1,2-dioctanoyl-sn-glycerol + CDP-choline = 1,2-dioctanoyl-sn-glycero-3-phosphocholine + CMP + H(+). It participates in phospholipid metabolism; phosphatidylcholine biosynthesis; phosphatidylcholine from phosphocholine: step 2/2. In terms of biological role, catalyzes the final step of de novo phosphatidylcholine (PC) synthesis, i.e. the transfer of choline phosphate from CDP-choline to the free hydroxyl of a diacylglycerol (DAG), producing a PC. It thereby plays a central role in the formation and maintenance of vesicular membranes. The sequence is that of Cholinephosphotransferase 1 (CHPT1) from Bos taurus (Bovine).